We begin with the raw amino-acid sequence, 314 residues long: Homeobox-leucine zipper protein HAT7 (314 aa).

Residues 77–109 are disordered; the sequence is HHHLTQKSPTTTNNMNDQDQVGEEDNLSDDGSH. Positions 82 to 95 are enriched in polar residues; sequence QKSPTTTNNMNDQD. The segment at residues 112 to 171 is a DNA-binding region (homeobox); the sequence is LGEKKKRLNLEQVRALEKSFELGNKLEPERKMQLAKALGLQPRQIAIWFQNRRARWKTKQ. A leucine-zipper region spans residues 172–207; it reads LERDYDSLKKQFDVLKSDNDSLLAHNKKLHAELVAL.

This sequence belongs to the HD-ZIP homeobox family. Class I subfamily. As to expression, expressed predominantly in flowers, and in the cortex of the root and the stem.

Its subcellular location is the nucleus. Probable transcription factor. In Arabidopsis thaliana (Mouse-ear cress), this protein is Homeobox-leucine zipper protein HAT7 (HAT7).